The chain runs to 568 residues: Pre-mRNA-processing protein 45 (568 aa).

3 disordered regions span residues 199–232 (EPPK…AQDQ), 281–449 (LNQN…QQKI), and 545–568 (AGKG…RDEE). Residues 286-364 (KTMRDDIGKR…SRDGDSDRSL (79 aa)) show a composition bias toward basic and acidic residues. Positions 365-379 (SRSLSASDRSYSRSR) are enriched in low complexity. Composition is skewed to basic and acidic residues over residues 395–419 (RSPE…LERA), 426–440 (ERLE…DLRL), and 557–568 (RDGPVRFVRDEE).

The protein belongs to the SNW family. In terms of assembly, associated with the spliceosome.

The protein localises to the nucleus. Functionally, involved in pre-mRNA splicing. This Yarrowia lipolytica (strain CLIB 122 / E 150) (Yeast) protein is Pre-mRNA-processing protein 45 (PRP45).